Here is a 144-residue protein sequence, read N- to C-terminus: Large ribosomal subunit protein uL15 (144 aa).

Positions 1–52 (MRLNTLSPAEGAKHAPKRVGRGIGSGLGKTAGRGHKGQNSRSGGGVRRGFEG) are disordered. Positions 21 to 31 (RGIGSGLGKTA) are enriched in gly residues.

It belongs to the universal ribosomal protein uL15 family. Part of the 50S ribosomal subunit.

In terms of biological role, binds to the 23S rRNA. This chain is Large ribosomal subunit protein uL15, found in Yersinia enterocolitica serotype O:8 / biotype 1B (strain NCTC 13174 / 8081).